Here is a 282-residue protein sequence, read N- to C-terminus: Complement component 1 Q subcomponent-binding protein, mitochondrial (282 aa).

Residues 1–73 constitute a mitochondrion transit peptide; it reads MLPLLRCVPR…PCACGCGCGS (73 aa). The tract at residues 76-93 is C1q binding; sequence TDGDKAFVDFLSDEIKEE. Residue Ser-87 is modified to Phosphoserine. Lys-91 is subject to N6-acetyllysine. Residues 138–164 are disordered; it reads SIPPTFDGEEEPSQGQKVEEQEPELTS. The tract at residues 168 to 213 is interaction with MAVS; sequence FVVEVIKNDDGKKALVLDCHYPEDEVGQEDEAESDIFSIREVSFQS. The residue at position 188 (Tyr-188) is a Phosphotyrosine. Ser-201 and Ser-205 each carry phosphoserine. Thr-214 is subject to Phosphothreonine.

The protein belongs to the MAM33 family. Homotrimer; three monomers form a donut-shaped structure with an unusually asymmetric charge distribution on the surface. Interacts with CDK13, HRK, VTN, NFYB, ADRA1B, FOXC1, DDX21, DDX50, NCL, SRSF1, SRSF9 and CDKN2A isoform smARF. Interacts with CD93; the association may represent a cell surface C1q receptor. Interacts with KRT1; the association represents a cell surface kininogen receptor. Interacts with CD209; the interaction is indicative for a C1q:C1QBP:CD209 signaling complex. Interacts with FBL and RRP1; the respective interactions with C1QBP are competitive. Probably associates with the mitoribosome. Interacts with MAVS; the interaction occurs upon viral transfection. Interacts with PPIF. Interacts with U2AF1L4. Interacts with PLEKHN1. Interacts with VGF-derived peptide TLQP-21. Interacts with POLGARF which is produced from an alternative reading frame of the POLG gene; the interaction results in nucleolar localization of C1QBP, probably due to prevention of C1QBP maturation and redirection from mitochondria to nucleoli. Interacts with MRE11 and RAD50; forming the MRC (MRE11-RAD50-C1QBP) complex that inhibits the activity of MRE11. As to quaternary structure, (Microbial infection) Interacts with Rubella virus capsid protein; the interaction occurs in mitochondria. Interacts with Rubella virus protease/methyltransferase p150. In terms of assembly, (Microbial infection) Interacts with Staphylococcus aureus protein A/spa. (Microbial infection) Interacts with Staphylococcus aureus protein A/spa, HIV-1 Tat and HCV core protein. As to quaternary structure, (Microbial infection) Interacts with HIV-1 Tat and HCV core protein. In terms of assembly, (Microbial infection) Interacts with L.monocytogenes internalin B. (Microbial infection) Interacts with Epstein-Barr virus EBNA1. As to expression, expressed on cell surface of peripheral blood cells (at protein level); Surface expression is reported for macrophages and monocyte-derived dendritic cells.

Its subcellular location is the mitochondrion matrix. The protein resides in the nucleus. It is found in the nucleolus. The protein localises to the cell membrane. It localises to the secreted. Its subcellular location is the cytoplasm. Its function is as follows. Multifunctional and multicompartmental protein involved in inflammation and infection processes, ribosome biogenesis, protein synthesis in mitochondria, regulation of apoptosis, transcriptional regulation and pre-mRNA splicing. At the cell surface is thought to act as an endothelial receptor for plasma proteins of the complement and kallikrein-kinin cascades. Putative receptor for C1q; specifically binds to the globular 'heads' of C1q thus inhibiting C1; may perform the receptor function through a complex with C1qR/CD93. In complex with cytokeratin-1/KRT1 is a high affinity receptor for kininogen-1/HMWK. Can also bind other plasma proteins, such as coagulation factor XII leading to its autoactivation. May function to bind initially fluid kininogen-1 to the cell membrane. The secreted form may enhance both extrinsic and intrinsic coagulation pathways. It is postulated that the cell surface form requires docking with transmembrane proteins for downstream signaling which might be specific for a cell-type or response. By acting as C1q receptor is involved in chemotaxis of immature dendritic cells and neutrophils and is proposed to signal through CD209/DC-SIGN on immature dendritic cells, through integrin alpha-4/beta-1 during trophoblast invasion of the decidua, and through integrin beta-1 during endothelial cell adhesion and spreading. Signaling involved in inhibition of innate immune response is implicating the PI3K-AKT/PKB pathway. Required for protein synthesis in mitochondria. In mitochondrial translation may be involved in formation of functional 55S mitoribosomes; the function seems to involve its RNA-binding activity. Acts as a RNA modification reader, which specifically recognizes and binds mitochondrial RNAs modified by C5-methylcytosine (m5C) in response to stress, and promotes recruitment of the mitochondrial degradosome complex, leading to their degradation. May be involved in the nucleolar ribosome maturation process; the function may involve the exchange of FBL for RRP1 in the association with pre-ribosome particles. Involved in regulation of RNA splicing by inhibiting the RNA-binding capacity of SRSF1 and its phosphorylation. Is required for the nuclear translocation of splicing factor U2AF1L4. Involved in regulation of CDKN2A- and HRK-mediated apoptosis. Stabilizes mitochondrial CDKN2A isoform smARF. May be involved in regulation of FOXC1 transcriptional activity and NFY/CCAAT-binding factor complex-mediated transcription. May play a role in antibacterial defense as it can bind to cell surface hyaluronan and inhibit Streptococcus pneumoniae hyaluronate lyase. May be involved in modulation of the immune response; ligation by HCV core protein is resulting in suppression of interleukin-12 production in monocyte-derived dendritic cells. Involved in regulation of antiviral response by inhibiting RIGI- and IFIH1-mediated signaling pathways probably involving its association with MAVS after viral infection. Acts as a regulator of DNA repair via homologous recombination by inhibiting the activity of MRE11: interacts with unphosphorylated MRE11 and RAD50 in absence of DNA damage, preventing formation and activity of the MRN complex. Following DNA damage, dissociates from phosphorylated MRE11, allowing formation of the MRN complex. Functionally, (Microbial infection) Involved in HIV-1 replication, presumably by contributing to splicing of viral RNA. In terms of biological role, (Microbial infection) In infection processes acts as an attachment site for microbial proteins, including Listeria monocytogenes internalin B (InlB) and Staphylococcus aureus protein A. (Microbial infection) Involved in replication of Rubella virus. This chain is Complement component 1 Q subcomponent-binding protein, mitochondrial (C1QBP), found in Homo sapiens (Human).